An 896-amino-acid chain; its full sequence is MIIDRIRLINFLSHEDSEIFFDTGVNIIVGHNGAGKSSIIDAIRFALFGDKRTKKIEDMIRKGAKSLEVEMEFRHGGHTYIIRRSITRRSKNPESNAMIMVDGSALSQSVKDANDYIEKNIITKSKDVFLNSVFSKQGEMDDLISGDPARRKKLLDEILEIEKLEETYDVLKDVIDSLQAGISNLDYLISENERDRDDLRRYQDDVAELSKQIDQEEAIESDLLRKKEEASAEYNAVSKELIMLDATLKNMMSLSDEANRYEEEIRKIDGKLQEISGSTERYNEITSSKVYASRERIRGYWTDKGQIIDYRKMLKNIDGQVQSYEDNMKKAAELQADHDQYEIMQRRMDEIKHELDDLRTYESKYVSLINEIEQKKKKREEYRKKQKDLGDEISRTLGRAFANASELVAIYEEIRRDIDEINTDLGNLQVKIGALRQKEEEIRRNMNMLEGHNKCPVCGTDLGDEGSRRIREHYSEDLNRLNEEIDHLEREASAIDEKKRQLISMESYLAKGKIREYETYDRQMKDLEAQITDDENSLSTIAYKHTKYEQLDEEYRSMHLEDLRQKYTDWNNAMAVISNIGDIEALRKQKDEVSKKLKDAEDRTHEIESEFPDINSYTPSYIGKIEDEVRLLEPQIKLAEDLKRQRETLREKVKDLRSRSAGMDEIQKRKNELSVKASESETRLKYVEGQIQATLSSLSGKRSKVETLRSHVSEIEQRISDRERDIERMKKIEKAINDVKRIREAFGKNGVPAMIRQSVSDYLTAKTRDYLSSFDLDFDDISVDQDFNVTVYRGGVPEGIDSLSGGEKTAVAFAIRVAVAQFLNADLSLLILDEPTAFLDEERRNSLSDIIEYTLKDSSVIPQVIIISHHRELLASANVAIEVKKIGGRSVVSNAD.

ATP is bound by residues 32 to 38 (NGAGKSS) and Gln137. 5 coiled-coil regions span residues 200-274 (RRYQ…KLQE), 412-505 (EEIR…LISM), 580-611 (IGDI…ESEF), 636-669 (IKLA…IQKR), and 702-731 (RSKV…RMKK). One can recognise a Zinc-hook domain in the interval 411–507 (YEEIRRDIDE…KKRQLISMES (97 aa)). 2 residues coordinate Zn(2+): Cys455 and Cys458.

The protein belongs to the SMC family. RAD50 subfamily. As to quaternary structure, homodimer. Forms a heterotetramer composed of two Mre11 subunits and two Rad50 subunits. It depends on Zn(2+) as a cofactor.

Its function is as follows. Part of the Rad50/Mre11 complex, which is involved in the early steps of DNA double-strand break (DSB) repair. The complex may facilitate opening of the processed DNA ends to aid in the recruitment of HerA and NurA. Rad50 controls the balance between DNA end bridging and DNA resection via ATP-dependent structural rearrangements of the Rad50/Mre11 complex. This is DNA double-strand break repair Rad50 ATPase from Thermoplasma acidophilum (strain ATCC 25905 / DSM 1728 / JCM 9062 / NBRC 15155 / AMRC-C165).